Reading from the N-terminus, the 216-residue chain is Protein-L-isoaspartate O-methyltransferase (216 aa).

Residue Ser64 is part of the active site.

This sequence belongs to the methyltransferase superfamily. L-isoaspartyl/D-aspartyl protein methyltransferase family.

The protein localises to the cytoplasm. It catalyses the reaction [protein]-L-isoaspartate + S-adenosyl-L-methionine = [protein]-L-isoaspartate alpha-methyl ester + S-adenosyl-L-homocysteine. In terms of biological role, catalyzes the methyl esterification of L-isoaspartyl residues in peptides and proteins that result from spontaneous decomposition of normal L-aspartyl and L-asparaginyl residues. It plays a role in the repair and/or degradation of damaged proteins. The sequence is that of Protein-L-isoaspartate O-methyltransferase from Paracoccus denitrificans (strain Pd 1222).